A 1106-amino-acid polypeptide reads, in one-letter code: DNA polymerase delta catalytic subunit (1106 aa).

The disordered stretch occupies residues 1 to 28; the sequence is MDGKRRPGPGPGVPPKRARGGLWDEDEA. Residues 4-19 carry the Nuclear localization signal motif; the sequence is KRRPGPGPGVPPKRAR. R19 is modified (omega-N-methylarginine). K573 is covalently cross-linked (Glycyl lysine isopeptide (Lys-Gly) (interchain with G-Cter in SUMO2)). Residues C1011, C1014, C1025, and C1028 each coordinate Zn(2+). Residues 1011–1028 form a CysA-type zinc finger; it reads CIGCRTVLSHQGAVCKFC. [4Fe-4S] cluster contacts are provided by C1057, C1060, C1070, and C1075. The CysB motif signature appears at 1057–1075; the sequence is CQRCQGSLHEDVICTSRDC.

This sequence belongs to the DNA polymerase type-B family. Component of the tetrameric DNA polymerase delta complex (Pol-delta4), which consists of POLD1/p125, POLD2/p50, POLD3/p66/p68 and POLD4/p12, with POLD1 bearing both DNA polymerase and 3' to 5' proofreading exonuclease activities. Within Pol-delta4, directly interacts with POLD2 and POLD4. Following genotoxic stress by DNA-damaging agents, such as ultraviolet light and methyl methanesulfonate, or by replication stress induced by treatment with hydroxyurea or aphidicolin, Pol-delta4 is converted into a trimeric form of the complex (Pol-delta3) by POLD4 degradation. Pol-delta3 is the major form at S phase replication sites and DNA damage sites. POLD1 displays different catalytic properties depending upon the complex it is found in. It exhibits higher proofreading activity and fidelity than Pol-delta4, making it particularly well suited to respond to DNA damage. Directly interacts with PCNA, as do POLD3 and POLD4; this interaction stimulates Pol-delta4 polymerase activity. As POLD2 and POLD4, directly interacts with WRNIP1; this interaction stimulates DNA polymerase delta-mediated DNA synthesis, independently of the presence of PCNA. This stimulation may be due predominantly to an increase of initiation frequency and also to increased processivity. Also observed as a dimeric complex with POLD2 (Pol-delta2). Pol-delta2 is relatively insensitive to the PCNA stimulation (2-5-fold) compared to Pol-delta4 that is stimulated by over 50-fold. Interacts with POLDIP2; this interaction is indirect and most probably mediated through POLD2-binding. Interacts with CIAO1. Interacts with POLDIP2. Interacts with RFC1. [4Fe-4S] cluster serves as cofactor.

Its subcellular location is the nucleus. The enzyme catalyses DNA(n) + a 2'-deoxyribonucleoside 5'-triphosphate = DNA(n+1) + diphosphate. Regulated by alteration of quaternary structure. Exhibits burst rates of DNA synthesis are about 5 times faster in the presence of POLD4 (Pol-delta4 complex) than in its absence (Pol-delta3 complex), while the affinity of the enzyme for its DNA and dNTP substrates appears unchanged. The Pol-delta3 complex is more likely to proofread DNA synthesis because it cleaves single-stranded DNA twice as fast and transfers mismatched DNA from the polymerase to the exonuclease sites 9 times faster compared to the Pol-delta3 complex. Pol-delta3 also extends mismatched primers 3 times more slowly in the absence of POLD4. The conversion of Pol-delta4 into Pol-delta3 is induced by genotoxic stress or by replication stress leading POLD4 degradation. Stimulated in the presence of PCNA. This stimulation is further increased in the presence of KCTD13/PDIP1, most probably via direct interaction between KCTD13 and POLD2. As the catalytic component of the trimeric (Pol-delta3 complex) and tetrameric DNA polymerase delta complexes (Pol-delta4 complex), plays a crucial role in high fidelity genome replication, including in lagging strand synthesis, and repair. Exhibits both DNA polymerase and 3'- to 5'-exonuclease activities. Requires the presence of accessory proteins POLD2, POLD3 and POLD4 for full activity. Depending upon the absence (Pol-delta3) or the presence of POLD4 (Pol-delta4), displays differences in catalytic activity. Most notably, expresses higher proofreading activity in the context of Pol-delta3 compared with that of Pol-delta4. Although both Pol-delta3 and Pol-delta4 process Okazaki fragments in vitro, Pol-delta3 may be better suited to fulfill this task, exhibiting near-absence of strand displacement activity compared to Pol-delta4 and stalling on encounter with the 5'-blocking oligonucleotides. Pol-delta3 idling process may avoid the formation of a gap, while maintaining a nick that can be readily ligated. Along with DNA polymerase kappa, DNA polymerase delta carries out approximately half of nucleotide excision repair (NER) synthesis following UV irradiation. Under conditions of DNA replication stress, in the presence of POLD3 and POLD4, may catalyze the repair of broken replication forks through break-induced replication (BIR). Involved in the translesion synthesis (TLS) of templates carrying O6-methylguanine, 8oxoG or abasic sites. In Bos taurus (Bovine), this protein is DNA polymerase delta catalytic subunit (POLD1).